Here is a 149-residue protein sequence, read N- to C-terminus: Large ribosomal subunit protein uL15 (149 aa).

Residues 8-49 (HDLRPAAGSNKPKTRVGRGEASKGKTAGRGTKGTGARKQVPA) form a disordered region. Positions 31–45 (GKTAGRGTKGTGARK) are enriched in low complexity.

The protein belongs to the universal ribosomal protein uL15 family. In terms of assembly, part of the 50S ribosomal subunit.

Its function is as follows. Binds to the 23S rRNA. The protein is Large ribosomal subunit protein uL15 of Corynebacterium aurimucosum (strain ATCC 700975 / DSM 44827 / CIP 107346 / CN-1) (Corynebacterium nigricans).